The primary structure comprises 671 residues: cGMP-dependent protein kinase 1 (671 aa).

Serine 2 is subject to N-acetylserine. The stretch at 2-59 forms a coiled coil; that stretch reads SELEEDFAKILMLKEERIKELEKRLSEKEEEIQELKRKLHKCQSVLPVPSTHIGPRTT. Positions 2–102 are required for dimerization; that stretch reads SELEEDFAKI…LIKEAILDND (101 aa). The segment at 9–44 is leucine-zipper; sequence AKILMLKEERIKELEKRLSEKEEEIQELKRKLHKCQ. Residues 50–75 form an autoinhibitory domain region; that stretch reads PSTHIGPRTTRAQGISAEPQTYRSFH. Position 59 is a phosphothreonine; by autocatalysis (threonine 59). The tract at residues 103–220 is cGMP-binding, high affinity; sequence FMKNLELSQI…EYMEFLKSVP (118 aa). 3',5'-cyclic AMP-binding positions include 167–170 and 177–178; these read GELA and RT. 3',5'-cyclic GMP contacts are provided by residues 167–170, 177–178, arginine 282, 291–294, 301–302, and tyrosine 336; these read GELA, RT, and GEKA. The interval 221-341 is cGMP-binding, low affinity; the sequence is TFQSLPEEIL…SNKAYEDAEA (121 aa). Residues 291–294, 301–302, and tyrosine 336 contribute to the 3',5'-cyclic AMP site; these read GEKA and RT. Residues 360–619 form the Protein kinase domain; sequence FNIIDTLGVG…VKDIQKHKWF (260 aa). Residues 366–374 and lysine 390 each bind ATP; that span reads LGVGGFGRV. Aspartate 484 functions as the Proton acceptor in the catalytic mechanism. Threonine 515 carries the post-translational modification Phosphothreonine. In terms of domain architecture, AGC-kinase C-terminal spans 620-671; the sequence is EGFNWEGLRKGTLTPPIIPSVASPTDTSNFDSFPEDNDEPPPDDNSGWDIDF. Positions 635–671 are disordered; it reads PIIPSVASPTDTSNFDSFPEDNDEPPPDDNSGWDIDF. Residues 652–661 show a composition bias toward acidic residues; sequence FPEDNDEPPP.

It belongs to the protein kinase superfamily. AGC Ser/Thr protein kinase family. cGMP subfamily. As to quaternary structure, isoform alpha: parallel homodimer or heterodimer and also heterotetramer. Interacts directly with PPP1R12A. Non-covalent dimer of dimer of PRKG1-PRKG1 and PPP1R12A-PPP1R12A. This interaction targets PRKG1 to stress fibers to mediate smooth muscle cell relaxation and vasodilation in responses to rises in cGMP. Isoform beta: antiparallel homodimer. Part of cGMP kinase signaling complex at least composed of ACTA2/alpha-actin, CNN1/calponin H1, PLN/phospholamban, PRKG1 and ITPR1. Interacts with IRAG1. Forms a stable complex with ITPR1, IRAG1, and isoform beta of PRKG1. Interacts with TRPC7 (via ankyrin repeat domain). Isoform alpha interacts with RGS2. Interacts with GTF2I. Autophosphorylation increases kinase activity. Post-translationally, 65 kDa monomer is produced by proteolytic cleavage. As to expression, primarily expressed in lung and placenta.

Its subcellular location is the cytoplasm. It catalyses the reaction L-seryl-[protein] + ATP = O-phospho-L-seryl-[protein] + ADP + H(+). The catalysed reaction is L-threonyl-[protein] + ATP = O-phospho-L-threonyl-[protein] + ADP + H(+). In the absence of cGMP, PRKG1 activity is suppressed by autoinhibitory contacts. Serine/threonine protein kinase that acts as a key mediator of the nitric oxide (NO)/cGMP signaling pathway. GMP binding activates PRKG1, which phosphorylates serines and threonines on many cellular proteins. Numerous protein targets for PRKG1 phosphorylation are implicated in modulating cellular calcium, but the contribution of each of these targets may vary substantially among cell types. Proteins that are phosphorylated by PRKG1 regulate platelet activation and adhesion, smooth muscle contraction, cardiac function, gene expression, feedback of the NO-signaling pathway, and other processes involved in several aspects of the CNS like axon guidance, hippocampal and cerebellar learning, circadian rhythm and nociception. Smooth muscle relaxation is mediated through lowering of intracellular free calcium, by desensitization of contractile proteins to calcium, and by decrease in the contractile state of smooth muscle or in platelet activation. Regulates intracellular calcium levels via several pathways: phosphorylates IRAG1 and inhibits IP3-induced Ca(2+) release from intracellular stores, phosphorylation of KCNMA1 (BKCa) channels decreases intracellular Ca(2+) levels, which leads to increased opening of this channel. PRKG1 phosphorylates the canonical transient receptor potential channel (TRPC) family which inactivates the associated inward calcium current. Another mode of action of NO/cGMP/PKGI signaling involves PKGI-mediated inactivation of the Ras homolog gene family member A (RhoA). Phosphorylation of RHOA by PRKG1 blocks the action of this protein in myriad processes: regulation of RHOA translocation; decreasing contraction; controlling vesicle trafficking, reduction of myosin light chain phosphorylation resulting in vasorelaxation. Activation of PRKG1 by NO signaling also alters gene expression in a number of tissues. In smooth muscle cells, increased cGMP and PRKG1 activity influence expression of smooth muscle-specific contractile proteins, levels of proteins in the NO/cGMP signaling pathway, down-regulation of the matrix proteins osteopontin and thrombospondin-1 to limit smooth muscle cell migration and phenotype. Regulates vasodilator-stimulated phosphoprotein (VASP) functions in platelets and smooth muscle. The sequence is that of cGMP-dependent protein kinase 1 (PRKG1) from Homo sapiens (Human).